The chain runs to 548 residues: Thermostable neutral protease NprT (548 aa).

Residues 1–25 (MNKRAMLGAIGLAFGLLAAPIGASA) form the signal peptide. Residues 26–229 (KGESIVWNEQ…DSRQPGGGQP (204 aa)) constitute a propeptide, activation peptide. Residues Asp289, Asp291, Gln293, and Asp370 each coordinate Ca(2+). Position 374 (His374) interacts with Zn(2+). Glu375 is an active-site residue. 2 residues coordinate Zn(2+): His378 and Glu398. Positions 409, 415, 417, 419, 422, 425, 426, 429, and 432 each coordinate Ca(2+). His463 serves as the catalytic Proton donor.

The protein belongs to the peptidase M4 family. It depends on Ca(2+) as a cofactor. Zn(2+) serves as cofactor.

The protein resides in the secreted. With respect to regulation, its casein hydrolytic activity is inhibited almost completely by a chelating agent (EDTA), whereas neither diisopropyl fluorophosphate nor phenylmethylsulfonyl fluoride inhibit the proteolytic activity in vitro. Functionally, extracellular zinc metalloprotease. In Geobacillus stearothermophilus (Bacillus stearothermophilus), this protein is Thermostable neutral protease NprT (nprT).